The primary structure comprises 283 residues: 4-diphosphocytidyl-2-C-methyl-D-erythritol kinase (283 aa).

K10 is a catalytic residue. 99–109 (PMGGGLGGGSS) is an ATP binding site. Residue D141 is part of the active site.

Belongs to the GHMP kinase family. IspE subfamily. As to quaternary structure, homodimer.

The catalysed reaction is 4-CDP-2-C-methyl-D-erythritol + ATP = 4-CDP-2-C-methyl-D-erythritol 2-phosphate + ADP + H(+). Its pathway is isoprenoid biosynthesis; isopentenyl diphosphate biosynthesis via DXP pathway; isopentenyl diphosphate from 1-deoxy-D-xylulose 5-phosphate: step 3/6. Catalyzes the phosphorylation of the position 2 hydroxy group of 4-diphosphocytidyl-2C-methyl-D-erythritol. This chain is 4-diphosphocytidyl-2-C-methyl-D-erythritol kinase, found in Salmonella choleraesuis (strain SC-B67).